The primary structure comprises 63 residues: Conotoxin Lt11.1 (63 aa).

The first 23 residues, 1 to 23, serve as a signal peptide directing secretion; that stretch reads MMFRLTSVLLVIVLLNLVVLTNA. Cystine bridges form between cysteine 24–cysteine 34, cysteine 28–cysteine 39, cysteine 33–cysteine 42, and cysteine 38–cysteine 47. Positions 53–63 are excised as a propeptide; sequence ALLQRLLGHQR.

This sequence belongs to the conotoxin I2 superfamily. As to expression, expressed by the venom duct.

The protein resides in the secreted. This Conus litteratus (Lettered cone) protein is Conotoxin Lt11.1.